Reading from the N-terminus, the 732-residue chain is Polyribonucleotide nucleotidyltransferase (732 aa).

Residues Asp-489 and Asp-495 each coordinate Mg(2+). Positions 556–615 (PKIDTIQIDVDKIKIVIGKGGETIDKIIAETGVKIDIDEEGLVQIFSSDQAAIDRTKEII) constitute a KH domain. In terms of domain architecture, S1 motif spans 625–693 (GEVYHAKVVR…DKGRVDASMK (69 aa)). The segment at 691-732 (SMKALIPRPPKPEKKEEKASEAKEASNDQASKSQSETASEEK) is disordered. The span at 700-716 (PKPEKKEEKASEAKEAS) shows a compositional bias: basic and acidic residues. The span at 717–732 (NDQASKSQSETASEEK) shows a compositional bias: polar residues.

The protein belongs to the polyribonucleotide nucleotidyltransferase family. Requires Mg(2+) as cofactor.

Its subcellular location is the cytoplasm. The enzyme catalyses RNA(n+1) + phosphate = RNA(n) + a ribonucleoside 5'-diphosphate. Its function is as follows. Involved in mRNA degradation. Catalyzes the phosphorolysis of single-stranded polyribonucleotides processively in the 3'- to 5'-direction. This chain is Polyribonucleotide nucleotidyltransferase, found in Streptococcus uberis (strain ATCC BAA-854 / 0140J).